The sequence spans 537 residues: Beta-hexosaminidase subunit beta (537 aa).

The N-terminal stretch at 1 to 23 (MPGSPRRAPGLLLQALVAMVSLA) is a signal peptide. N-linked (GlcNAc...) asparagine glycosylation occurs at N62. Residues C69 and C115 are joined by a disulfide bond. N168 and N305 each carry an N-linked (GlcNAc...) asparagine glycan. Cystine bridges form between C287–C338 and C512–C529. E333 (proton donor) is an active-site residue.

This sequence belongs to the glycosyl hydrolase 20 family. There are 3 forms of beta-hexosaminidase: hexosaminidase A is a heterodimer composed of one subunit alpha and one subunit beta (chain A and B); hexosaminidase B is a homodimer of two beta subunits (two chains A and B); hexosaminidase S is a homodimer of two alpha subunits. The composition of the dimer (isozyme A versus isozyme S) has a significant effect on the substrate specificity of the alpha subunit active site.

It is found in the lysosome. The protein localises to the cytoplasmic vesicle. Its subcellular location is the secretory vesicle. The protein resides in the cortical granule. The enzyme catalyses Hydrolysis of terminal non-reducing N-acetyl-D-hexosamine residues in N-acetyl-beta-D-hexosaminides.. It catalyses the reaction N-acetyl-beta-D-galactosaminyl-(1-&gt;4)-beta-D-3-sulfogalactosyl-(1-&gt;4)-beta-D-glucosyl-(1&lt;-&gt;1')-ceramide + H2O = a beta-D-3-sulfogalactosyl-(1-&gt;4)-beta-D-glucosyl-(1&lt;-&gt;1')-ceramide + N-acetyl-beta-D-galactosamine. It carries out the reaction a ganglioside GM2 (d18:1(4E)) + H2O = a ganglioside GM3 (d18:1(4E)) + N-acetyl-beta-D-galactosamine. The catalysed reaction is a ganglioside GM2 + H2O = a ganglioside GM3 + N-acetyl-beta-D-galactosamine. The enzyme catalyses beta-D-GalNAc-(1-&gt;4)-alpha-L-IdoA-(1-&gt;3)-beta-D-GalNAc-4-sulfate-(1-&gt;4)-alpha-L-IdoA-(1-&gt;3)-D-GalNAc-4-sulfate + H2O = alpha-L-IdoA-(1-&gt;3)-beta-D-GalNAc-4-sulfate-(1-&gt;4)-alpha-L-IdoA-(1-&gt;3)-D-GalNAc-4-sulfate + N-acetyl-D-galactosamine. It catalyses the reaction N-acetyl-beta-D-6-sulfogalactosaminyl-(1-&gt;4)-alpha-L-iduronyl-(1-&gt;3)-N-acetyl-D-6-sulfogalactosamine + H2O = alpha-L-iduronyl-(1-&gt;3)-N-acetyl-D-6-sulfogalactosamine + N-acetyl-D-6-sulfogalactosamine. Its activity is regulated as follows. Addition of GM2A stimulates the hydrolysis of sulfated glycosphingolipid SM2 and the ganglioside GM2. In terms of biological role, hydrolyzes the non-reducing end N-acetyl-D-hexosamine and/or sulfated N-acetyl-D-hexosamine of glycoconjugates, such as the oligosaccharide moieties from proteins and neutral glycolipids, or from certain mucopolysaccharides. The isozyme B does not hydrolyze each of these substrates, however hydrolyzes efficiently neutral oligosaccharide. Only the isozyme A is responsible for the degradation of GM2 gangliosides in the presence of GM2A. During fertilization is responsible, at least in part, for the zona block to polyspermy. Present in the cortical granules of non-activated oocytes, is exocytosed during the cortical reaction in response to oocyte activation and inactivates the sperm galactosyltransferase-binding site, accounting for the block in sperm binding to the zona pellucida. The polypeptide is Beta-hexosaminidase subunit beta (Rattus norvegicus (Rat)).